The chain runs to 296 residues: Aquaporin NIP1-1 (296 aa).

Residue M1 is modified to N-acetylmethionine. A run of 2 helical transmembrane segments spans residues 57–77 and 84–104; these read LIAE…SVVV and VVTL…LIYS. The short motif at 114–116 is the NPA 1 element; it reads NPA. The next 3 membrane-spanning stretches (helical) occupy residues 136–156, 180–200, and 205–225; these read VISQ…LFGL, AFTM…GVAT, and IGEL…LIAA. The short motif at 233-235 is the NPA 2 element; sequence NPG. The chain crosses the membrane as a helical span at residues 249 to 269; it reads GIWIYLVAPTLGAIAGAWVYN. S286 is modified (phosphoserine).

The protein belongs to the MIP/aquaporin (TC 1.A.8) family. NIP (TC 1.A.8.12) subfamily. In terms of tissue distribution, expressed in roots.

The protein localises to the membrane. Functionally, water channel probably required to promote glycerol permeability and water transport across cell membranes. The sequence is that of Aquaporin NIP1-1 (NIP1-1) from Arabidopsis thaliana (Mouse-ear cress).